A 383-amino-acid chain; its full sequence is Acetylornithine deacetylase (383 aa).

Histidine 80 lines the Zn(2+) pocket. Aspartate 82 is a catalytic residue. Aspartate 112 is a Zn(2+) binding site. Glutamate 144 is a catalytic residue. Residues glutamate 145, glutamate 169, and histidine 355 each coordinate Zn(2+).

Belongs to the peptidase M20A family. ArgE subfamily. As to quaternary structure, homodimer. Zn(2+) is required as a cofactor. Co(2+) serves as cofactor. The cofactor is glutathione.

The protein localises to the cytoplasm. The catalysed reaction is N(2)-acetyl-L-ornithine + H2O = L-ornithine + acetate. It participates in amino-acid biosynthesis; L-arginine biosynthesis; L-ornithine from N(2)-acetyl-L-ornithine (linear): step 1/1. In terms of biological role, catalyzes the hydrolysis of the amide bond of N(2)-acetylated L-amino acids. Cleaves the acetyl group from N-acetyl-L-ornithine to form L-ornithine, an intermediate in L-arginine biosynthesis pathway, and a branchpoint in the synthesis of polyamines. In Escherichia coli O7:K1 (strain IAI39 / ExPEC), this protein is Acetylornithine deacetylase.